A 91-amino-acid chain; its full sequence is Sec-independent protein translocase protein TatA (91 aa).

Residues 1 to 21 (MGAMQPMHWLIVAVVVVILFG) form a helical membrane-spanning segment.

This sequence belongs to the TatA/E family. As to quaternary structure, the Tat system comprises two distinct complexes: a TatABC complex, containing multiple copies of TatA, TatB and TatC subunits, and a separate TatA complex, containing only TatA subunits. Substrates initially bind to the TatABC complex, which probably triggers association of the separate TatA complex to form the active translocon.

Its subcellular location is the cell membrane. In terms of biological role, part of the twin-arginine translocation (Tat) system that transports large folded proteins containing a characteristic twin-arginine motif in their signal peptide across membranes. TatA could form the protein-conducting channel of the Tat system. This Rhodococcus erythropolis (strain PR4 / NBRC 100887) protein is Sec-independent protein translocase protein TatA.